Here is a 236-residue protein sequence, read N- to C-terminus: 2-C-methyl-D-erythritol 4-phosphate cytidylyltransferase (236 aa).

Belongs to the IspD/TarI cytidylyltransferase family. IspD subfamily.

The enzyme catalyses 2-C-methyl-D-erythritol 4-phosphate + CTP + H(+) = 4-CDP-2-C-methyl-D-erythritol + diphosphate. The protein operates within isoprenoid biosynthesis; isopentenyl diphosphate biosynthesis via DXP pathway; isopentenyl diphosphate from 1-deoxy-D-xylulose 5-phosphate: step 2/6. In terms of biological role, catalyzes the formation of 4-diphosphocytidyl-2-C-methyl-D-erythritol from CTP and 2-C-methyl-D-erythritol 4-phosphate (MEP). This chain is 2-C-methyl-D-erythritol 4-phosphate cytidylyltransferase, found in Paraburkholderia phymatum (strain DSM 17167 / CIP 108236 / LMG 21445 / STM815) (Burkholderia phymatum).